Here is a 510-residue protein sequence, read N- to C-terminus: 2,3-bisphosphoglycerate-independent phosphoglycerate mutase (510 aa).

Mn(2+) contacts are provided by Asp13 and Ser63. Ser63 acts as the Phosphoserine intermediate in catalysis. Substrate contacts are provided by residues His124, 154 to 155 (RD), Arg186, Arg192, 262 to 265 (RADR), and Lys334. The Mn(2+) site is built by Asp401, His405, Asp442, His443, and His461.

It belongs to the BPG-independent phosphoglycerate mutase family. In terms of assembly, monomer. Requires Mn(2+) as cofactor.

It carries out the reaction (2R)-2-phosphoglycerate = (2R)-3-phosphoglycerate. It participates in carbohydrate degradation; glycolysis; pyruvate from D-glyceraldehyde 3-phosphate: step 3/5. In terms of biological role, catalyzes the interconversion of 2-phosphoglycerate and 3-phosphoglycerate. This chain is 2,3-bisphosphoglycerate-independent phosphoglycerate mutase, found in Aliivibrio fischeri (strain MJ11) (Vibrio fischeri).